We begin with the raw amino-acid sequence, 88 residues long: Small ribosomal subunit protein uS15c (88 aa).

This sequence belongs to the universal ribosomal protein uS15 family. Part of the 30S ribosomal subunit.

It localises to the plastid. The protein localises to the chloroplast. The polypeptide is Small ribosomal subunit protein uS15c (rps15) (Aethionema cordifolium (Lebanon stonecress)).